The primary structure comprises 564 residues: MVRNSSDEEEDHRNLIPQNDTRDNDLNLRPDARTVNMANGGGRSPRSALQIDEILSRARNRWKISVNKRYVVAAVSLTLFVGLLFLFTDTRTFFSSFKLDPMSSRVKESELQALNLLRQQQLALVSLLNRTNFNSSNAISSSVVIDNVKAALLKQISVNKEIEEVLLSPHRTGNYSITASGSDSFTGSYNADICRKVDQKLLDRKTIEWKPRPDKFLFAICLSGQMSNHLICLEKHMFFAALLDRVLVIPSSKFDYQYDKVIDIERINTCLGRTVVISFDQFKEIDKKNNAHIDRFICYVSSPQPCYVDEDHIKKLKGLGVSIGGKLEAPWSEDIKKPTKRTSQEVVEKFKSDDGVIAIGDVFYADMEQDLVMQPGGPINHKCKTLIEPSRLILVTAQRFIQTFLGKNFISLHLRRHGFLKFCNAKSPSCFYPIPQAADCISRMVERANAPVIYLSTDAAESETGLLQSLVVVDGKVVPLVKRPPQNSAEKWDSLLYRHGIEDDSQVYAMLDKTICAMSSVFIGASGSTFTEDILRLRKDWGTSSMCDEYLCRGEEPNFIAENE.

Residues 1 to 28 (MVRNSSDEEEDHRNLIPQNDTRDNDLNL) are disordered. The chain crosses the membrane as a helical; Signal-anchor for type II membrane protein span at residues 70–90 (YVVAAVSLTLFVGLLFLFTDT). N-linked (GlcNAc...) asparagine glycans are attached at residues Asn-129, Asn-134, and Asn-174. Substrate is bound by residues 413-415 (HLR) and 529-530 (TF).

The protein belongs to the glycosyltransferase GT106 family.

The protein resides in the membrane. Its pathway is glycan metabolism. This is O-fucosyltransferase 5 from Arabidopsis thaliana (Mouse-ear cress).